A 513-amino-acid polypeptide reads, in one-letter code: 2-isopropylmalate synthase (513 aa).

The 263-residue stretch at 4–266 folds into the Pyruvate carboxyltransferase domain; the sequence is IEFFDTSLRD…QSPLKLSETA (263 aa). Positions 13, 201, 203, and 237 each coordinate Mn(2+). Residues 390 to 513 are regulatory domain; sequence ILDNVQIDGH…VEQISAHDGI (124 aa).

It belongs to the alpha-IPM synthase/homocitrate synthase family. LeuA type 1 subfamily. In terms of assembly, homodimer. The cofactor is Mn(2+).

It is found in the cytoplasm. It carries out the reaction 3-methyl-2-oxobutanoate + acetyl-CoA + H2O = (2S)-2-isopropylmalate + CoA + H(+). Its pathway is amino-acid biosynthesis; L-leucine biosynthesis; L-leucine from 3-methyl-2-oxobutanoate: step 1/4. Functionally, catalyzes the condensation of the acetyl group of acetyl-CoA with 3-methyl-2-oxobutanoate (2-ketoisovalerate) to form 3-carboxy-3-hydroxy-4-methylpentanoate (2-isopropylmalate). The polypeptide is 2-isopropylmalate synthase (Lactococcus lactis subsp. lactis (strain IL1403) (Streptococcus lactis)).